Reading from the N-terminus, the 445-residue chain is Succinate--CoA ligase [ADP-forming] subunit beta, mitochondrial (445 aa).

The N-terminal 17 residues, 1 to 17 (MLSNIVKKTIQSSKNLK), are a transit peptide targeting the mitochondrion. An ATP-grasp domain is found at 43–270 (QKMMKSYGIN…DNAAFRHPDI (228 aa)). Residues K80 and 87–89 (GRG) each bind ATP. N240 and D254 together coordinate Mg(2+). Residues N305 and 362 to 364 (GIM) contribute to the substrate site.

Belongs to the succinate/malate CoA ligase beta subunit family. ATP-specific subunit beta subfamily. As to quaternary structure, heterodimer of an alpha and a beta subunit. The beta subunit determines specificity for ATP. Mg(2+) serves as cofactor.

Its subcellular location is the mitochondrion. The enzyme catalyses succinate + ATP + CoA = succinyl-CoA + ADP + phosphate. Its pathway is carbohydrate metabolism; tricarboxylic acid cycle; succinate from succinyl-CoA (ligase route): step 1/1. ATP-specific succinyl-CoA synthetase functions in the citric acid cycle (TCA), coupling the hydrolysis of succinyl-CoA to the synthesis of ATP and thus represents the only step of substrate-level phosphorylation in the TCA. The beta subunit provides nucleotide specificity of the enzyme and binds the substrate succinate, while the binding sites for coenzyme A and phosphate are found in the alpha subunit. This is Succinate--CoA ligase [ADP-forming] subunit beta, mitochondrial (scsC) from Dictyostelium discoideum (Social amoeba).